The sequence spans 281 residues: MKSVNTIHEVKNIVKDWKKQGLSVGLVPTMGYLHEGHGSLILKARENSKVVVSIFVNPMQFGPTEDLEKYPRDLEKDLKYCEELGADLIFSPEPGEMYPEGFCTSVDMSVLTEELCGLSRPSHFKGVCTIVNKLLNIVNPDRAYFGEKDAQQLVIVKRMVRDLNMDIEIVGCPIIREKDGLAKSSRNTYLNSEERRAALVLSKSIFTGKDMVKKGCRETDVLLKKMKAIIDQEPLARIDYLKAVDTMTMQQVDTIDRPVLIAMAVYIGNVRLIDNFSFIPD.

Residue 30–37 (MGYLHEGH) coordinates ATP. Residue His37 is the Proton donor of the active site. Gln60 lines the (R)-pantoate pocket. Gln60 lines the beta-alanine pocket. Residue 146–149 (GEKD) participates in ATP binding. (R)-pantoate is bound at residue Gln152. ATP-binding positions include Ile175 and 183-186 (KSSR).

It belongs to the pantothenate synthetase family. As to quaternary structure, homodimer.

Its subcellular location is the cytoplasm. The enzyme catalyses (R)-pantoate + beta-alanine + ATP = (R)-pantothenate + AMP + diphosphate + H(+). It participates in cofactor biosynthesis; (R)-pantothenate biosynthesis; (R)-pantothenate from (R)-pantoate and beta-alanine: step 1/1. Its function is as follows. Catalyzes the condensation of pantoate with beta-alanine in an ATP-dependent reaction via a pantoyl-adenylate intermediate. This chain is Pantothenate synthetase, found in Ruminiclostridium cellulolyticum (strain ATCC 35319 / DSM 5812 / JCM 6584 / H10) (Clostridium cellulolyticum).